A 237-amino-acid chain; its full sequence is UPF0174 protein YaaW (237 aa).

The protein belongs to the UPF0174 family.

In Escherichia coli (strain K12), this protein is UPF0174 protein YaaW (yaaW).